The primary structure comprises 399 residues: MTRFQRVAVLGSTGSIGDSTLDVIARHPDRLGVYALSAYSRMDKLAAQAAACGAAVVVVPDDAAAARFRAAWRGKAAMPEVRVGPRTLAETAAAPECTTVMAAIVGAAGLPAALAAAQAGKRVLLANKEALVAAGSLFMAAVRENGAELLPIDSEHNAIFQCMPQGARAAAPTAPAPGVRRLLLTASGGPFRRQDPADLHEVTPAQACAHPNWSMGRKISVDSATMLNKGLEVIEAHWLFAMPSERIDVLIHPQSVVHSMVEYDDGSVLAQLGQPDMRTPIAYGLGFPERLASGVGLLDLTRWGRLDFEQPDLQRFPCLALSFAALRAGQPACVALNAANEVAVAAFLEGRLRYTWVARVIEAVLEWQAKQASVTLTSLDDVLDLDARARSFAGNLGLA.

The NADPH site is built by threonine 13, glycine 14, serine 15, isoleucine 16, and asparagine 127. Residue lysine 128 participates in 1-deoxy-D-xylulose 5-phosphate binding. Glutamate 129 provides a ligand contact to NADPH. Aspartate 153 serves as a coordination point for Mn(2+). 1-deoxy-D-xylulose 5-phosphate contacts are provided by serine 154, glutamate 155, serine 187, and histidine 210. Position 155 (glutamate 155) interacts with Mn(2+). Glycine 216 is a binding site for NADPH. 4 residues coordinate 1-deoxy-D-xylulose 5-phosphate: serine 223, asparagine 228, lysine 229, and glutamate 232. Mn(2+) is bound at residue glutamate 232.

Belongs to the DXR family. Requires Mg(2+) as cofactor. Mn(2+) serves as cofactor.

It carries out the reaction 2-C-methyl-D-erythritol 4-phosphate + NADP(+) = 1-deoxy-D-xylulose 5-phosphate + NADPH + H(+). Its pathway is isoprenoid biosynthesis; isopentenyl diphosphate biosynthesis via DXP pathway; isopentenyl diphosphate from 1-deoxy-D-xylulose 5-phosphate: step 1/6. Catalyzes the NADPH-dependent rearrangement and reduction of 1-deoxy-D-xylulose-5-phosphate (DXP) to 2-C-methyl-D-erythritol 4-phosphate (MEP). The sequence is that of 1-deoxy-D-xylulose 5-phosphate reductoisomerase from Bordetella parapertussis (strain 12822 / ATCC BAA-587 / NCTC 13253).